A 130-amino-acid polypeptide reads, in one-letter code: MSMQDPIADMLTRIRNGQAANHVSVKMPSAKLKVAIAKLLKDEGFITEYAVADEAKPELEITLKYFQGKPVVETIQRVSRPGLRIYKGKDELPKVMGGLGIAIVSTSQGLMTDRAARQNGTGGEVICYVA.

This sequence belongs to the universal ribosomal protein uS8 family. As to quaternary structure, part of the 30S ribosomal subunit. Contacts proteins S5 and S12.

Its function is as follows. One of the primary rRNA binding proteins, it binds directly to 16S rRNA central domain where it helps coordinate assembly of the platform of the 30S subunit. The polypeptide is Small ribosomal subunit protein uS8 (Shewanella frigidimarina (strain NCIMB 400)).